The following is a 646-amino-acid chain: ATP-dependent zinc metalloprotease FtsH (646 aa).

Over 1–4 (MTRS) the chain is Cytoplasmic. Residues 5–25 (LLWQMVIVLGAILMVNYVLTT) form a helical membrane-spanning segment. At 26 to 120 (LTPQTQEPVV…VRPESKPSPW (95 aa)) the chain is on the periplasmic side. The helical transmembrane segment at 121–141 (ATAMIYMLPWLLIVGVWWFVI) threads the bilayer. The Cytoplasmic segment spans residues 142–646 (KGMRTRQGPG…GELAGGAVEG (505 aa)). Residue 216–223 (GPPGTGKT) coordinates ATP. H437 provides a ligand contact to Zn(2+). E438 is a catalytic residue. H441 and D513 together coordinate Zn(2+).

It in the central section; belongs to the AAA ATPase family. This sequence in the C-terminal section; belongs to the peptidase M41 family. Homohexamer. The cofactor is Zn(2+).

It is found in the cell inner membrane. Acts as a processive, ATP-dependent zinc metallopeptidase for both cytoplasmic and membrane proteins. Plays a role in the quality control of integral membrane proteins. In Syntrophotalea carbinolica (strain DSM 2380 / NBRC 103641 / GraBd1) (Pelobacter carbinolicus), this protein is ATP-dependent zinc metalloprotease FtsH.